Consider the following 20-residue polypeptide: Citrate synthase (20 aa).

It belongs to the citrate synthase family. As to quaternary structure, homohexamer.

The catalysed reaction is oxaloacetate + acetyl-CoA + H2O = citrate + CoA + H(+). It functions in the pathway carbohydrate metabolism; tricarboxylic acid cycle; isocitrate from oxaloacetate: step 1/2. With respect to regulation, allosterically inhibited by NADH. The chain is Citrate synthase (gltA) from Streptomyces hygroscopicus.